A 192-amino-acid polypeptide reads, in one-letter code: METHDLTLDDFLSRFQLLRPKMSRDVLNRRQAAVLIPLVRREQPGLLLTKRASHMRKHPGQVAFPGGAVDSTDASLIAAALREAHEEVAIPPEVVEIIGVLPPVDSVTGFQVTPVVGIIPPDLHYHASEEEVAAVFEMPLSEALRLSRYHPLDIQRRGHDHRVWLSWYQHYFVWGMTAGIIRELALQIGMKP.

The Nudix hydrolase domain occupies 29–160 (RRQAAVLIPL…PLDIQRRGHD (132 aa)). Positions 67-89 (GAVDSTDASLIAAALREAHEEVA) match the Nudix box motif. Glutamate 83 and glutamate 87 together coordinate Mg(2+).

Belongs to the Nudix hydrolase family. PCD1 subfamily. Mn(2+) serves as cofactor. It depends on Mg(2+) as a cofactor.

Probably mediates the hydrolysis of some nucleoside diphosphate derivatives. This is an uncharacterized protein from Enterobacter sp. (strain 638).